The following is a 543-amino-acid chain: Carboxypeptidase Y homolog A (543 aa).

An N-terminal signal peptide occupies residues 1–17 (MKFLTTGLLATAALAAA). Residues 18-124 (QEQHVLQAED…KLHNYDLRVK (107 aa)) constitute a propeptide that is removed on maturation. 5 disulfide bridges follow: C179–C419, C313–C327, C337–C360, C344–C353, and C382–C389. N210 carries N-linked (GlcNAc...) asparagine glycosylation. The active site involves S266. Residue D458 is part of the active site. N509 is a glycosylation site (N-linked (GlcNAc...) asparagine). Residue H520 is part of the active site.

It belongs to the peptidase S10 family.

The protein localises to the vacuole. The catalysed reaction is Release of a C-terminal amino acid with broad specificity.. Functionally, vacuolar carboxypeptidase involved in degradation of small peptides. Digests preferentially peptides containing an aliphatic or hydrophobic residue in P1' position, as well as methionine, leucine or phenylalanine in P1 position of ester substrate. This is Carboxypeptidase Y homolog A (cpyA) from Trichophyton verrucosum (strain HKI 0517).